The chain runs to 186 residues: Ribosome-recycling factor (186 aa).

The protein belongs to the RRF family.

Its subcellular location is the cytoplasm. In terms of biological role, responsible for the release of ribosomes from messenger RNA at the termination of protein biosynthesis. May increase the efficiency of translation by recycling ribosomes from one round of translation to another. This Herminiimonas arsenicoxydans protein is Ribosome-recycling factor.